Here is a 333-residue protein sequence, read N- to C-terminus: Eukaryotic translation initiation factor 3 subunit H-B (333 aa).

Residues 20 to 154 (IQIEGLVVMK…LKAYRLTPKL (135 aa)) enclose the MPN domain. The segment at 249–295 (SKQQQQKHQYVQRRQQENAQRQSRGEPPLPEEDLTKMFKPPQPPPRM) is disordered. Low complexity predominate over residues 250–261 (KQQQQKHQYVQR).

Belongs to the eIF-3 subunit H family. Component of the eukaryotic translation initiation factor 3 (eIF-3) complex, which is composed of 13 subunits: eif3a, eif3b, eif3c, eif3d, eif3e, eif3f, eif3g, eif3h, eif3i, eif3j, eif3k, eif3l and eif3m.

Its subcellular location is the cytoplasm. Its function is as follows. Component of the eukaryotic translation initiation factor 3 (eIF-3) complex, which is involved in protein synthesis of a specialized repertoire of mRNAs and, together with other initiation factors, stimulates binding of mRNA and methionyl-tRNAi to the 40S ribosome. The eIF-3 complex specifically targets and initiates translation of a subset of mRNAs involved in cell proliferation. This is Eukaryotic translation initiation factor 3 subunit H-B (eif3hb) from Danio rerio (Zebrafish).